Consider the following 234-residue polypeptide: MEKKDMLYEGKAKKIFRTDDKDTVVVYYKDDATAFNGEKKGTIEDKGVMNNSITAMLFELLEKKGVKTHFIEKINEREQLCKKVEIVPLEVIVRNIAAGSMAKILGLSEGRKLDTTVFEISYKNDDLNDPLINDYHAVAIGLTNFEELKEMYSIAEKVNNTLKEFFDEQGINLVDFKIEIGRFNGELLLADEISPDTCRLWDKKTGEKLDKDRFRRDMGNVKEAYMEILKRVNK.

This sequence belongs to the SAICAR synthetase family.

It catalyses the reaction 5-amino-1-(5-phospho-D-ribosyl)imidazole-4-carboxylate + L-aspartate + ATP = (2S)-2-[5-amino-1-(5-phospho-beta-D-ribosyl)imidazole-4-carboxamido]succinate + ADP + phosphate + 2 H(+). It participates in purine metabolism; IMP biosynthesis via de novo pathway; 5-amino-1-(5-phospho-D-ribosyl)imidazole-4-carboxamide from 5-amino-1-(5-phospho-D-ribosyl)imidazole-4-carboxylate: step 1/2. This Clostridium botulinum (strain Langeland / NCTC 10281 / Type F) protein is Phosphoribosylaminoimidazole-succinocarboxamide synthase.